Here is a 247-residue protein sequence, read N- to C-terminus: Chymase (247 aa).

Positions 1 to 19 (MLLLPLPLLLLFLCSRAEA) are cleaved as a signal peptide. A propeptide spans 20–21 (GE) (activation peptide). In terms of domain architecture, Peptidase S1 spans 22 to 245 (IIGGTECKPH…YRPWINKILQ (224 aa)). A disulfide bridge links Cys-51 with Cys-67. Residue His-66 is the Charge relay system of the active site. 2 N-linked (GlcNAc...) asparagine glycosylation sites follow: Asn-80 and Asn-103. Asp-110 functions as the Charge relay system in the catalytic mechanism. 2 disulfides stabilise this stretch: Cys-144–Cys-209 and Cys-175–Cys-188. Ser-203 functions as the Charge relay system in the catalytic mechanism.

It belongs to the peptidase S1 family. Granzyme subfamily.

It is found in the secreted. It localises to the cytoplasmic granule. It catalyses the reaction Preferential cleavage: Phe-|-Xaa &gt; Tyr-|-Xaa &gt; Trp-|-Xaa &gt; Leu-|-Xaa.. Its function is as follows. Major secreted protease of mast cells with suspected roles in vasoactive peptide generation, extracellular matrix degradation, and regulation of gland secretion. The protein is Chymase (CMA1) of Papio hamadryas (Hamadryas baboon).